The primary structure comprises 459 residues: ATP-dependent protease ATPase subunit HslU (459 aa).

ATP-binding positions include Val-18, 60–65, Asp-272, Glu-337, and Arg-409; that span reads GVGKTE.

It belongs to the ClpX chaperone family. HslU subfamily. In terms of assembly, a double ring-shaped homohexamer of HslV is capped on each side by a ring-shaped HslU homohexamer. The assembly of the HslU/HslV complex is dependent on binding of ATP.

It localises to the cytoplasm. ATPase subunit of a proteasome-like degradation complex; this subunit has chaperone activity. The binding of ATP and its subsequent hydrolysis by HslU are essential for unfolding of protein substrates subsequently hydrolyzed by HslV. HslU recognizes the N-terminal part of its protein substrates and unfolds these before they are guided to HslV for hydrolysis. The protein is ATP-dependent protease ATPase subunit HslU of Thermoanaerobacter pseudethanolicus (strain ATCC 33223 / 39E) (Clostridium thermohydrosulfuricum).